We begin with the raw amino-acid sequence, 518 residues long: MPTVVVMDVSLSMTRPVSIEGSEEYQRKHLAAHGLTMLFEHMATNYKLEFTALVVFSSLWELMVPFTRDYNTLQEALSNMDDYDKTCLESALVGVCNIVQQEWGGAIPCQVVLVTDGCLGIGRGSLRHSLATQNQRSESNRFPLPFPFPSKLYIMCMANLEELQSTDSLECLERLIDLNNGEGQIFTIDGPLCLKNVQSMFGKLIDLAYTPFHAVLKCGHLTADVQVFPRPEPFVVDEEIDPIPKVINTDLEIVGFIDIADISSPPVLSRHLVLPIALNKEGDEVGTGITDDNEDENSANQIAGKIPNFCVLLHGSLKVEGMVAIVQLGPEWHGMLYSQADSKKKSNLMMSLFEPGPEPLPWLGKMAQLGPISDAKENPYGEDDNKSPFPLQPKNKRSYAQNVTVWIKPSGLQTDVQKILRNARKLPEKTQTFYKELNRLRKAALAFGFLDLLKGVADMLERECTLLPETAHPDAAFQLTHAAQQLKLASTGTSEYAAYDQNITPLHTDFSGSSTERI.

The VWFA domain maps to 2 to 204; it reads PTVVVMDVSL…KNVQSMFGKL (203 aa). Mg(2+) is bound by residues S10, S12, and T86. N6-acetyllysine is present on K418.

It belongs to the Integrator subunit 14 family. In terms of assembly, component of the Integrator complex, composed of core subunits INTS1, INTS2, INTS3, INTS4, INTS5, INTS6, INTS7, INTS8, INTS9/RC74, INTS10, INTS11/CPSF3L, INTS12, INTS13, INTS14 and INTS15. The core complex associates with protein phosphatase 2A subunits PPP2CA and PPP2R1A, to form the Integrator-PP2A (INTAC) complex. INTS14 is part of the tail subcomplex, composed of INTS10, INTS13, INTS14 and INTS15. Strongly expressed in numerous cancer cells compared with their non-cancerous counterparts (lung, prostate, colon, stomach and skin).

The protein resides in the nucleus. In terms of biological role, component of the integrator complex, a multiprotein complex that terminates RNA polymerase II (Pol II) transcription in the promoter-proximal region of genes. The integrator complex provides a quality checkpoint during transcription elongation by driving premature transcription termination of transcripts that are unfavorably configured for transcriptional elongation: the complex terminates transcription by (1) catalyzing dephosphorylation of the C-terminal domain (CTD) of Pol II subunit POLR2A/RPB1 and SUPT5H/SPT5, (2) degrading the exiting nascent RNA transcript via endonuclease activity and (3) promoting the release of Pol II from bound DNA. The integrator complex is also involved in terminating the synthesis of non-coding Pol II transcripts, such as enhancer RNAs (eRNAs), small nuclear RNAs (snRNAs), telomerase RNAs and long non-coding RNAs (lncRNAs). Within the integrator complex, INTS14 is part of the integrator tail module that acts as a platform for the recruitment of transcription factors at promoters. This chain is Integrator complex subunit 14, found in Homo sapiens (Human).